The chain runs to 1496 residues: Chromosome partition protein MukB (1496 aa).

Residue 63–70 participates in ATP binding; it reads GGNGAGKS. Coiled coils occupy residues 328–493, 536–632, 808–832, 861–1171, and 1235–1291; these read KLEL…QRLS, KMQA…APAW, RAAR…HAER, NPEE…SAEE, and IDAI…LQNI. The interval 694–811 is flexible hinge; that stretch reads PDGSDDVRLN…EVPLFGRAAR (118 aa). The segment covering 1082-1091 has biased composition (basic and acidic residues); that stretch reads RARSRRDELQ. The interval 1082 to 1101 is disordered; the sequence is RARSRRDELQQRLSQQRSRK.

It belongs to the SMC family. MukB subfamily. Homodimerization via its hinge domain. Binds to DNA via its C-terminal region. Interacts, and probably forms a ternary complex, with MukE and MukF via its C-terminal region. The complex formation is stimulated by calcium or magnesium. Interacts with tubulin-related protein FtsZ.

It is found in the cytoplasm. The protein localises to the nucleoid. Functionally, plays a central role in chromosome condensation, segregation and cell cycle progression. Functions as a homodimer, which is essential for chromosome partition. Involved in negative DNA supercoiling in vivo, and by this means organize and compact chromosomes. May achieve or facilitate chromosome segregation by condensation DNA from both sides of a centrally located replisome during cell division. The chain is Chromosome partition protein MukB from Actinobacillus pleuropneumoniae serotype 5b (strain L20).